The primary structure comprises 311 residues: Bifunctional protein FolD (311 aa).

Position 174–176 (174–176) interacts with NADP(+); the sequence is GKG.

This sequence belongs to the tetrahydrofolate dehydrogenase/cyclohydrolase family. As to quaternary structure, homodimer.

The enzyme catalyses (6R)-5,10-methylene-5,6,7,8-tetrahydrofolate + NADP(+) = (6R)-5,10-methenyltetrahydrofolate + NADPH. It carries out the reaction (6R)-5,10-methenyltetrahydrofolate + H2O = (6R)-10-formyltetrahydrofolate + H(+). Its pathway is one-carbon metabolism; tetrahydrofolate interconversion. Its function is as follows. Catalyzes the oxidation of 5,10-methylenetetrahydrofolate to 5,10-methenyltetrahydrofolate and then the hydrolysis of 5,10-methenyltetrahydrofolate to 10-formyltetrahydrofolate. The protein is Bifunctional protein FolD of Pyrobaculum arsenaticum (strain DSM 13514 / JCM 11321 / PZ6).